The sequence spans 1029 residues: Beta-galactosidase 2 (1029 aa).

Substrate is bound by residues asparagine 104 and aspartate 203. Aspartate 203 is a Na(+) binding site. Residues glutamate 418, histidine 420, and glutamate 463 each contribute to the Mg(2+) site. Substrate is bound by residues glutamate 463 and 539–542; that span reads EYAH. Catalysis depends on glutamate 463, which acts as the Proton donor. Glutamate 539 serves as the catalytic Nucleophile. Asparagine 599 lines the Mg(2+) pocket. 2 residues coordinate Na(+): phenylalanine 603 and asparagine 606. Substrate contacts are provided by asparagine 606 and tryptophan 1004.

The protein belongs to the glycosyl hydrolase 2 family. In terms of assembly, homotetramer. It depends on Mg(2+) as a cofactor. Requires Na(+) as cofactor.

It catalyses the reaction Hydrolysis of terminal non-reducing beta-D-galactose residues in beta-D-galactosides.. In Enterobacter cloacae, this protein is Beta-galactosidase 2.